The following is a 514-amino-acid chain: ATP synthase subunit alpha (514 aa).

170-177 (GDRQTGKT) contributes to the ATP binding site.

It belongs to the ATPase alpha/beta chains family. As to quaternary structure, F-type ATPases have 2 components, CF(1) - the catalytic core - and CF(0) - the membrane proton channel. CF(1) has five subunits: alpha(3), beta(3), gamma(1), delta(1), epsilon(1). CF(0) has three main subunits: a(1), b(2) and c(9-12). The alpha and beta chains form an alternating ring which encloses part of the gamma chain. CF(1) is attached to CF(0) by a central stalk formed by the gamma and epsilon chains, while a peripheral stalk is formed by the delta and b chains.

It localises to the cell inner membrane. The catalysed reaction is ATP + H2O + 4 H(+)(in) = ADP + phosphate + 5 H(+)(out). In terms of biological role, produces ATP from ADP in the presence of a proton gradient across the membrane. The alpha chain is a regulatory subunit. This chain is ATP synthase subunit alpha, found in Acinetobacter baumannii (strain AB307-0294).